The following is a 169-amino-acid chain: Putative pre-16S rRNA nuclease (169 aa).

Residues 1–19 (MTDSDHRLPDRPGEGDPGR) are compositionally biased toward basic and acidic residues. The disordered stretch occupies residues 1 to 22 (MTDSDHRLPDRPGEGDPGRGRR).

The protein belongs to the YqgF nuclease family.

It is found in the cytoplasm. Could be a nuclease involved in processing of the 5'-end of pre-16S rRNA. The polypeptide is Putative pre-16S rRNA nuclease (Mycobacterium sp. (strain JLS)).